We begin with the raw amino-acid sequence, 245 residues long: tRNA (guanine-N(1)-)-methyltransferase (245 aa).

Residues Gly114 and 134 to 139 contribute to the S-adenosyl-L-methionine site; that span reads IGDYIL.

Belongs to the RNA methyltransferase TrmD family. Homodimer.

It localises to the cytoplasm. The catalysed reaction is guanosine(37) in tRNA + S-adenosyl-L-methionine = N(1)-methylguanosine(37) in tRNA + S-adenosyl-L-homocysteine + H(+). Specifically methylates guanosine-37 in various tRNAs. The chain is tRNA (guanine-N(1)-)-methyltransferase from Listeria welshimeri serovar 6b (strain ATCC 35897 / DSM 20650 / CCUG 15529 / CIP 8149 / NCTC 11857 / SLCC 5334 / V8).